A 408-amino-acid polypeptide reads, in one-letter code: Putative polysaccharide ligase RBE_0399 (408 aa).

The next 10 membrane-spanning stretches (helical) occupy residues 5–25, 72–92, 94–114, 130–150, 163–183, 192–212, 230–250, 325–345, 359–377, and 380–400; these read FFIF…AATV, MTIK…LFAI, PINS…GFVV, LIFG…SYGF, MLDR…AILI, LILY…ASFL, IFSK…PIIA, ILQI…SLVY, FRAS…GMIS, and VWQI…KLLV.

The protein belongs to the O-antigen ligase family.

It is found in the membrane. The sequence is that of Putative polysaccharide ligase RBE_0399 (rfaL) from Rickettsia bellii (strain RML369-C).